A 358-amino-acid chain; its full sequence is UDP-N-acetylglucosamine--N-acetylmuramyl-(pentapeptide) pyrophosphoryl-undecaprenol N-acetylglucosamine transferase (358 aa).

UDP-N-acetyl-alpha-D-glucosamine is bound by residues 10–12 (TGG), Asn-124, Arg-165, Ser-187, Ile-243, and Gln-288.

This sequence belongs to the glycosyltransferase 28 family. MurG subfamily.

Its subcellular location is the cell inner membrane. It carries out the reaction di-trans,octa-cis-undecaprenyl diphospho-N-acetyl-alpha-D-muramoyl-L-alanyl-D-glutamyl-meso-2,6-diaminopimeloyl-D-alanyl-D-alanine + UDP-N-acetyl-alpha-D-glucosamine = di-trans,octa-cis-undecaprenyl diphospho-[N-acetyl-alpha-D-glucosaminyl-(1-&gt;4)]-N-acetyl-alpha-D-muramoyl-L-alanyl-D-glutamyl-meso-2,6-diaminopimeloyl-D-alanyl-D-alanine + UDP + H(+). The protein operates within cell wall biogenesis; peptidoglycan biosynthesis. Cell wall formation. Catalyzes the transfer of a GlcNAc subunit on undecaprenyl-pyrophosphoryl-MurNAc-pentapeptide (lipid intermediate I) to form undecaprenyl-pyrophosphoryl-MurNAc-(pentapeptide)GlcNAc (lipid intermediate II). The sequence is that of UDP-N-acetylglucosamine--N-acetylmuramyl-(pentapeptide) pyrophosphoryl-undecaprenol N-acetylglucosamine transferase from Syntrophotalea carbinolica (strain DSM 2380 / NBRC 103641 / GraBd1) (Pelobacter carbinolicus).